Here is a 1486-residue protein sequence, read N- to C-terminus: Phosphatidylinositol 3-kinase C2 domain-containing subunit gamma (1486 aa).

Positions 285–371 constitute a PI3K-RBD domain; it reads KTKFNIHIFI…IQLHLQKSRE (87 aa). Residues 521–669 enclose the C2 PI3K-type domain; that stretch reads LPSHLSFTVY…SPVTLQIDFP (149 aa). Residues 684-860 enclose the PIK helical domain; that stretch reads RSNLEEPLKE…QKLLAALQFC (177 aa). One can recognise a PI3K/PI4K catalytic domain in the interval 929-1207; the sequence is DHDACSYFTS…KIKESLECFP (279 aa). Positions 935–941 are G-loop; that stretch reads YFTSNAL. The catalytic loop stretch occupies residues 1071 to 1079; that stretch reads GVCDRHNDN. The activation loop stretch occupies residues 1090 to 1116; that stretch reads HIDFGKFLGHAQTFGGIKRDRAPFIFT. The 113-residue stretch at 1240–1352 folds into the PX domain; sequence LSTTRSIERA…SFFLSEAVQQ (113 aa). Residues 1369–1486 form the C2 domain; the sequence is KKPKVQLVIS…KWYPLGNSII (118 aa).

The protein belongs to the PI3/PI4-kinase family. Highly expressed in liver, prostate and testis. Lower levels in small intestine, kidney and pancreas.

The protein localises to the membrane. It carries out the reaction a 1,2-diacyl-sn-glycero-3-phospho-(1D-myo-inositol 4-phosphate) + ATP = a 1,2-diacyl-sn-glycero-3-phospho-(1D-myo-inositol-3,4-bisphosphate) + ADP + H(+). The catalysed reaction is a 1,2-diacyl-sn-glycero-3-phospho-(1D-myo-inositol) + ATP = a 1,2-diacyl-sn-glycero-3-phospho-(1D-myo-inositol-3-phosphate) + ADP + H(+). Functionally, generates phosphatidylinositol 3-phosphate (PtdIns3P) and phosphatidylinositol 3,4-bisphosphate (PtdIns(3,4)P2) that act as second messengers. May play a role in SDF1A-stimulated chemotaxis. This Homo sapiens (Human) protein is Phosphatidylinositol 3-kinase C2 domain-containing subunit gamma (PIK3C2G).